Reading from the N-terminus, the 165-residue chain is Glycine cleavage system H protein, mitochondrial (165 aa).

The transit peptide at 1–34 (MALRMWASSTANALKLSSSSRLHLSPTFSISRCF) directs the protein to the mitochondrion. The 83-residue stretch at 56 to 138 (VATIGITDHA…YEDGWMIKIK (83 aa)) folds into the Lipoyl-binding domain. The residue at position 97 (lysine 97) is an N6-lipoyllysine.

The protein belongs to the GcvH family. As to quaternary structure, the glycine cleavage system is composed of four proteins: P, T, L and H. It depends on (R)-lipoate as a cofactor.

It localises to the mitochondrion. Its function is as follows. The glycine cleavage system catalyzes the degradation of glycine. The H protein shuttles the methylamine group of glycine from the P protein to the T protein. This Pisum sativum (Garden pea) protein is Glycine cleavage system H protein, mitochondrial (GDCSH).